Consider the following 456-residue polypeptide: FAD-dependent monooxygenase sor5 (456 aa).

Residues 18–38 (PLEVAIVGGGLTGLALALGLL) traverse the membrane as a helical segment. The N-linked (GlcNAc...) asparagine glycan is linked to asparagine 43. Residues glutamate 48 and arginine 119 each coordinate FAD. Residue arginine 200 is part of the active site. Residues aspartate 331 and alanine 344 each coordinate FAD.

It belongs to the paxM FAD-dependent monooxygenase family. It depends on FAD as a cofactor.

It is found in the membrane. It functions in the pathway secondary metabolite biosynthesis. FAD-dependent monooxygenase; part of the SOR gene cluster that mediates the biosynthesis of sorbicillinoids, a diverse group of yellow secondary metabolites that restrict growth of competing pathogenic fungi but not of bacteria. Sorbicillinoids biosynthesis requires the action of two PKSs. The SOR cluster is required for the production of trichodimerol and dihydrotrichotetronin, with sor2 being sufficient for production of trichodimerol, but not dihydrotrichotetronin in the light. Sor1 iteratively combines three acetyl units and the growing chain is modified by the ketoacyl reductase subunit, and optional by the enoyl reductase subunit in the second cycle. The polyketide is then handed over to the PKS sor2, which adds three more acetyl units, and two methyl groups. Sor2 releases an aldehyde, which undergoes spontaneous cyclization resulting in the formation of sorbicillin or 2',3'-dihydrosorbicillin. The monooxygenase sor5 oxidizes sorbicillin and 2',3'-dihydrosorbicillin to 2',3'-dihydrosorbicillinol and sorbicillinol, respectively. The oxidoreductase sor8 further converts sorbicillinol into oxosorbicillinol. Sorbicillinol is the building block for the other sorbicillinoids such as disorbicillinol, bisvertinolon, dihydrobisvertinolone, and dihydrotrichotetronine. This chain is FAD-dependent monooxygenase sor5, found in Hypocrea jecorina (strain QM6a) (Trichoderma reesei).